The chain runs to 274 residues: Large ribosomal subunit protein uL2 (274 aa).

2 disordered regions span residues 28–53 (APYA…TVRH) and 223–274 (VAMN…RRNK). Over residues 39 to 48 (KSGGRNNNGR) the composition is skewed to low complexity.

The protein belongs to the universal ribosomal protein uL2 family. Part of the 50S ribosomal subunit. Forms a bridge to the 30S subunit in the 70S ribosome.

One of the primary rRNA binding proteins. Required for association of the 30S and 50S subunits to form the 70S ribosome, for tRNA binding and peptide bond formation. It has been suggested to have peptidyltransferase activity; this is somewhat controversial. Makes several contacts with the 16S rRNA in the 70S ribosome. The protein is Large ribosomal subunit protein uL2 of Pseudoalteromonas atlantica (strain T6c / ATCC BAA-1087).